We begin with the raw amino-acid sequence, 118 residues long: Small ribosomal subunit protein mS37 (118 aa).

The region spanning 42-84 (EATCITEMSMMMACWKQNEFRDEACRKEIQDFFDCSSRAQEAR) is the CHCH domain. 2 consecutive short sequence motifs (cx9C motif) follow at residues 45–55 (CITEMSMMMAC) and 66–76 (CRKEIQDFFDC). 2 cysteine pairs are disulfide-bonded: cysteine 45-cysteine 76 and cysteine 55-cysteine 66. The tract at residues 86–105 (MRSIQESLGQSESLSPHKMT) is disordered. The segment covering 89–99 (IQESLGQSESL) has biased composition (polar residues).

Belongs to the mitochondrion-specific ribosomal protein mS37 family. As to quaternary structure, component of the mitochondrial ribosome small subunit (28S) which comprises a 12S rRNA and about 30 distinct proteins.

It is found in the mitochondrion. The protein resides in the nucleus. The chain is Small ribosomal subunit protein mS37 (Chchd1) from Mus musculus (Mouse).